Reading from the N-terminus, the 570-residue chain is Proline--tRNA ligase (570 aa).

Belongs to the class-II aminoacyl-tRNA synthetase family. ProS type 1 subfamily. Homodimer.

The protein localises to the cytoplasm. It carries out the reaction tRNA(Pro) + L-proline + ATP = L-prolyl-tRNA(Pro) + AMP + diphosphate. In terms of biological role, catalyzes the attachment of proline to tRNA(Pro) in a two-step reaction: proline is first activated by ATP to form Pro-AMP and then transferred to the acceptor end of tRNA(Pro). As ProRS can inadvertently accommodate and process non-cognate amino acids such as alanine and cysteine, to avoid such errors it has two additional distinct editing activities against alanine. One activity is designated as 'pretransfer' editing and involves the tRNA(Pro)-independent hydrolysis of activated Ala-AMP. The other activity is designated 'posttransfer' editing and involves deacylation of mischarged Ala-tRNA(Pro). The misacylated Cys-tRNA(Pro) is not edited by ProRS. This Shewanella sp. (strain ANA-3) protein is Proline--tRNA ligase.